Reading from the N-terminus, the 315-residue chain is ADP-L-glycero-D-manno-heptose-6-epimerase (315 aa).

NADP(+)-binding positions include 10–11, 31–32, Lys-38, Lys-53, 76–80, and Asn-93; these read FI, DD, and QGACS. Catalysis depends on Tyr-140, which acts as the Proton acceptor. Position 144 (Lys-144) interacts with NADP(+). Residue Asn-169 participates in substrate binding. Positions 170 and 178 each coordinate NADP(+). Lys-178 serves as the catalytic Proton acceptor. Substrate is bound by residues Ser-180, His-187, 201-204, Arg-214, and Tyr-278; that span reads FEGC.

It belongs to the NAD(P)-dependent epimerase/dehydratase family. HldD subfamily. As to quaternary structure, homopentamer. The cofactor is NADP(+).

The catalysed reaction is ADP-D-glycero-beta-D-manno-heptose = ADP-L-glycero-beta-D-manno-heptose. It participates in nucleotide-sugar biosynthesis; ADP-L-glycero-beta-D-manno-heptose biosynthesis; ADP-L-glycero-beta-D-manno-heptose from D-glycero-beta-D-manno-heptose 7-phosphate: step 4/4. In terms of biological role, catalyzes the interconversion between ADP-D-glycero-beta-D-manno-heptose and ADP-L-glycero-beta-D-manno-heptose via an epimerization at carbon 6 of the heptose. The sequence is that of ADP-L-glycero-D-manno-heptose-6-epimerase from Syntrophotalea carbinolica (strain DSM 2380 / NBRC 103641 / GraBd1) (Pelobacter carbinolicus).